Here is a 1873-residue protein sequence, read N- to C-terminus: Ankyrin repeat domain-containing protein 31 (1873 aa).

Disordered regions lie at residues 1–27 (MEEG…SDLE) and 361–380 (EPLS…DQET). Residues 361 to 379 (EPLSNKRNSNSVTNSSDQE) are compositionally biased toward polar residues. ANK repeat units follow at residues 488 to 517 (FGEN…NVNQ), 521 to 550 (AGWT…DVNI), and 554 to 583 (YQIT…DPLF). The interval 707-740 (TGLRKGNLHNVKDPNTNVPKGIGRRKTQHKRTQV) is disordered. Residues 728–737 (IGRRKTQHKR) are compositionally biased toward basic residues. ANK repeat units lie at residues 1154–1183 (RGES…DVNL), 1187–1216 (AGWT…KVNC), and 1220–1249 (DGIL…NPNQ). 4 disordered regions span residues 1242–1263 (QNGA…EADD), 1449–1482 (RSEI…SGSM), 1512–1549 (FSGN…PSQP), and 1606–1634 (CDQD…ASES). The span at 1250–1263 (KDQKQKSALDEADD) shows a compositional bias: basic and acidic residues. Polar residues-rich tracts occupy residues 1460–1482 (ELTS…SGSM) and 1515–1525 (NDMNSKQNGSD). Positions 1535-1544 (RHSDGTEKNK) are enriched in basic and acidic residues. The segment covering 1621–1632 (KTSSQQSPTGAS) has biased composition (polar residues). Residues 1683-1778 (KKALNYSTAP…TYLGKELLRY (96 aa)) form the RAMA domain.

As to quaternary structure, interacts with REC114; the interaction is direct. Interacts with IHO1.

The protein localises to the nucleus. The protein resides in the chromosome. In terms of biological role, required for DNA double-strand breaks (DSBs) formation during meiotic recombination. Regulates the spatial and temporal patterns of pre-DSB recombinosome assembly and recombination activity by acting as a scaffold that anchors REC114 and other factors to specific genomic locations, thereby regulating DSB formation. Plays a key role in recombination in the pseudoautosomal regions of sex chromosomes. The chain is Ankyrin repeat domain-containing protein 31 from Homo sapiens (Human).